The sequence spans 350 residues: MDHKMSMYLFVSYLAIFTLFFKGFVSSFPSGYNNGYNNGHGHGLTSNLNYRFYDRSCPRLQTIVKSGVWRAFKDDSRIAASLLRLHFHDCFVNGCDGSILLNDSEDFKGEKNAQPNRNSVRGFEVIEDIKSDIESSCPLTVSCADIVALAAREAVVLTGGPFWPVPLGRRDSLTASEQAANTNLPSPFEALENITAKFVTLGLDLKDVVVLSGAHTIGFAQCFVIKHRLFNFKGSGQPDPNLAASSALLSKLKDTCPNVDSSDSKLAALDAASSVKFDNAYYVNLMNNIGLLDSDQTLMTDPTAAALVKSYSENPYLFSRDFAVSMVKMGNIGVMTGSDGVIRGKCGFPG.

Positions methionine 1–serine 27 are cleaved as a signal peptide. Disulfide bonds link cysteine 57-cysteine 137, cysteine 90-cysteine 95, cysteine 143-cysteine 346, and cysteine 222-cysteine 256. Histidine 88 serves as the catalytic Proton acceptor. The Ca(2+) site is built by aspartate 89, valine 92, glycine 94, aspartate 96, and serine 98. Asparagine 102 carries N-linked (GlcNAc...) asparagine glycosylation. A substrate-binding site is contributed by proline 185. An N-linked (GlcNAc...) asparagine glycan is attached at asparagine 193. Histidine 215 contacts heme b. Threonine 216 is a Ca(2+) binding site. Ca(2+) contacts are provided by aspartate 270, serine 273, and aspartate 278.

This sequence belongs to the peroxidase family. Classical plant (class III) peroxidase subfamily. Heme b is required as a cofactor. The cofactor is Ca(2+). In terms of tissue distribution, expressed in the whole plant, with the highest expression in roots.

The protein localises to the secreted. It catalyses the reaction 2 a phenolic donor + H2O2 = 2 a phenolic radical donor + 2 H2O. Functionally, removal of H(2)O(2), oxidation of toxic reductants, biosynthesis and degradation of lignin, suberization, auxin catabolism, response to environmental stresses such as wounding, pathogen attack and oxidative stress. These functions might be dependent on each isozyme/isoform in each plant tissue. The protein is Peroxidase 10 (PER10) of Arabidopsis thaliana (Mouse-ear cress).